A 447-amino-acid chain; its full sequence is Argininosuccinate synthase (447 aa).

ATP contacts are provided by residues A17 to S25 and A43. Y99 provides a ligand contact to L-citrulline. Residues G129 and T131 each coordinate ATP. L-aspartate-binding residues include T131, N135, and D136. N135 lines the L-citrulline pocket. D136 serves as a coordination point for ATP. R139 and S192 together coordinate L-citrulline. Residue D194 coordinates ATP. The L-citrulline site is built by T201, E203, and E280.

This sequence belongs to the argininosuccinate synthase family. Type 2 subfamily. In terms of assembly, homotetramer.

It is found in the cytoplasm. It carries out the reaction L-citrulline + L-aspartate + ATP = 2-(N(omega)-L-arginino)succinate + AMP + diphosphate + H(+). It participates in amino-acid biosynthesis; L-arginine biosynthesis; L-arginine from L-ornithine and carbamoyl phosphate: step 2/3. The sequence is that of Argininosuccinate synthase from Shigella flexneri serotype 5b (strain 8401).